The primary structure comprises 341 residues: S-adenosylmethionine:tRNA ribosyltransferase-isomerase (341 aa).

This sequence belongs to the QueA family. As to quaternary structure, monomer.

It is found in the cytoplasm. It catalyses the reaction 7-aminomethyl-7-carbaguanosine(34) in tRNA + S-adenosyl-L-methionine = epoxyqueuosine(34) in tRNA + adenine + L-methionine + 2 H(+). Its pathway is tRNA modification; tRNA-queuosine biosynthesis. In terms of biological role, transfers and isomerizes the ribose moiety from AdoMet to the 7-aminomethyl group of 7-deazaguanine (preQ1-tRNA) to give epoxyqueuosine (oQ-tRNA). In Chlorobium luteolum (strain DSM 273 / BCRC 81028 / 2530) (Pelodictyon luteolum), this protein is S-adenosylmethionine:tRNA ribosyltransferase-isomerase.